The chain runs to 1234 residues: Complement factor H (1234 aa).

Positions 1–18 (MRLSARIIWLILWTVCAA) are cleaved as a signal peptide. Sushi domains lie at 19 to 82 (EDCK…ICRK), 83 to 143 (KPCG…LCEV), 144 to 207 (VKCL…RCVE), 208 to 264 (ILCT…FCEE), 265 to 322 (KRCS…RCTL), 324 to 386 (PCEF…VPCV), 387 to 444 (RKCV…KCIR), 446 to 507 (KTCS…SCIK), 508 to 566 (SCDM…SCYE), 567 to 624 (RECS…TCKG), 627 to 685 (ASCA…VCIE), 688 to 745 (RTCG…KCVA), 750 to 804 (EKCR…NCTS), 806 to 863 (TSCP…RCIE), 865 to 933 (IPCS…RCVG), 934 to 991 (LPCG…KCIK), 992 to 1050 (TDCD…VCKD), 1051 to 1109 (NSCV…KCRD), 1112 to 1170 (GKCG…TCLH), and 1171 to 1234 (ACVI…PTCV). Disulfide bonds link Cys21–Cys66, Cys52–Cys80, Cys85–Cys129, Cys114–Cys141, Cys146–Cys192, Cys178–Cys205, Cys210–Cys251, Cys237–Cys262, Cys267–Cys309, Cys294–Cys320, Cys325–Cys374, Cys357–Cys385, Cys389–Cys431, Cys416–Cys442, Cys448–Cys494, Cys477–Cys505, Cys509–Cys553, Cys536–Cys564, Cys569–Cys610, Cys597–Cys622, Cys629–Cys672, Cys658–Cys683, Cys690–Cys732, Cys718–Cys743, Cys752–Cys791, Cys780–Cys802, Cys808–Cys850, Cys836–Cys861, Cys867–Cys920, Cys906–Cys931, Cys936–Cys978, Cys964–Cys989, Cys994–Cys1037, Cys1023–Cys1048, Cys1053–Cys1096, Cys1082–Cys1107, Cys1114–Cys1157, Cys1143–Cys1168, Cys1172–Cys1223, and Cys1206–Cys1233. N-linked (GlcNAc...) asparagine glycosylation is found at Asn676, Asn721, Asn773, and Asn801. Residues 872–896 (TIEHGSINLPRSSEERRDSIESSSH) are disordered. Basic and acidic residues predominate over residues 883–896 (SSEERRDSIESSSH). N-linked (GlcNAc...) asparagine glycosylation is found at Asn1030 and Asn1061. Ser1198 carries the phosphoserine modification. A glycan (N-linked (GlcNAc...) asparagine) is linked at Asn1225.

Homodimer. Also forms homooligomers. Interacts with complement protein C3b; this interaction inhibits complement activation. Interacts with complement protein C3d. Interacts with CR3/ITGAM; this interaction mediates adhesion of neutrophils to pathogens leading to pathogen clearance. Sulfated on tyrosine residues. As to expression, CFH is one of the most abundant complement components in blood where the liver is the major source of CFH protein in vivo. in addition, CFH is secreted by additional cell types including monocytes, fibroblasts, or endothelial cells.

The protein localises to the secreted. Functionally, glycoprotein that plays an essential role in maintaining a well-balanced immune response by modulating complement activation. Acts as a soluble inhibitor of complement, where its binding to self markers such as glycan structures prevents complement activation and amplification on cell surfaces. Accelerates the decay of the complement alternative pathway (AP) C3 convertase C3bBb, thus preventing local formation of more C3b, the central player of the complement amplification loop. As a cofactor of the serine protease factor I, CFH also regulates proteolytic degradation of already-deposited C3b. In addition, mediates several cellular responses through interaction with specific receptors. For example, interacts with CR3/ITGAM receptor and thereby mediates the adhesion of human neutrophils to different pathogens. In turn, these pathogens are phagocytosed and destroyed. The sequence is that of Complement factor H (Cfh) from Mus musculus (Mouse).